A 204-amino-acid polypeptide reads, in one-letter code: UPF0637 protein Lm4b_01081 (204 aa).

The protein belongs to the UPF0637 family.

In Listeria monocytogenes serotype 4b (strain CLIP80459), this protein is UPF0637 protein Lm4b_01081.